The chain runs to 284 residues: Interferon antagonist OPG039 (284 aa).

ANK repeat units lie at residues 29–58, 60–89, 93–122, 127–157, 159–188, and 192–221; these read NGHS…LKNL, DNEF…DDSQ, KGNT…RLMF, GWKT…PFDL, ILLS…STNT, and LFIP…NIYS.

The protein belongs to the orthopoxvirus OPG039 family.

The protein localises to the host cytoplasm. The protein resides in the host nucleus. Functionally, inhibits antiviral activity induced by type I interferons. Does not block signal transduction of IFN, but is important to counter the host antiviral state induced by a pre-treatment with IFN. Plays a role in the inhibition of host NF-kappa-B activation by preventing the acetylation of the RELA/p65 subunit of NF-kappaB. This Cynomys gunnisoni (Gunnison's prairie dog) protein is Interferon antagonist OPG039 (OPG039).